The following is a 349-amino-acid chain: Probable arabinogalactan endo-beta-1,4-galactanase A (349 aa).

An N-terminal signal peptide occupies residues 1–15; that stretch reads MLLSFLPLLPLATAA. Residue Asn126 is glycosylated (N-linked (GlcNAc...) asparagine). The Proton donor role is filled by Glu150. Residue Glu261 is the Nucleophile of the active site.

The protein belongs to the glycosyl hydrolase 53 family.

It localises to the secreted. It carries out the reaction The enzyme specifically hydrolyzes (1-&gt;4)-beta-D-galactosidic linkages in type I arabinogalactans.. Its function is as follows. Endogalactanase involved in the degradation of plant cell wall polysaccharides, and more particularly of hairy regions of pectin. This Aspergillus terreus (strain NIH 2624 / FGSC A1156) protein is Probable arabinogalactan endo-beta-1,4-galactanase A (galA).